We begin with the raw amino-acid sequence, 141 residues long: Large ribosomal subunit protein bL17 (141 aa).

It belongs to the bacterial ribosomal protein bL17 family. As to quaternary structure, part of the 50S ribosomal subunit. Contacts protein L32.

The polypeptide is Large ribosomal subunit protein bL17 (Agrobacterium fabrum (strain C58 / ATCC 33970) (Agrobacterium tumefaciens (strain C58))).